Consider the following 150-residue polypeptide: Small ribosomal subunit protein uS19y (150 aa).

It belongs to the universal ribosomal protein uS19 family.

Its subcellular location is the cytoplasm. In Arabidopsis thaliana (Mouse-ear cress), this protein is Small ribosomal subunit protein uS19y (RPS15C).